The following is a 559-amino-acid chain: DnaJ homolog subfamily C member 11 (559 aa).

At Ala2 the chain carries N-acetylalanine. One can recognise a J domain in the interval 14-82 (DYYSLLNVRR…QTRAIYDIYG (69 aa)). A Phosphoserine modification is found at Ser204. Residues 417 to 457 (EKELEKQRESAATDVLQKKQEAESAVRLMQESVRRIIEAEE) adopt a coiled-coil conformation.

The protein belongs to the DNAJC11 family. In terms of assembly, associates with the mitochondrial contact site and cristae organizing system (MICOS) complex, composed of at least MICOS10/MIC10, CHCHD3/MIC19, CHCHD6/MIC25, APOOL/MIC27, IMMT/MIC60, APOO/MIC23/MIC26 and QIL1/MIC13. This complex was also known under the names MINOS or MitOS complex. The MICOS complex associates with mitochondrial outer membrane proteins SAMM50, MTX1 and MTX2 (together described as components of the mitochondrial outer membrane sorting assembly machinery (SAM) complex) and DNAJC11, mitochondrial inner membrane protein TMEM11 and with HSPA9. The MICOS and SAM complexes together with DNAJC11 are part of a large protein complex spanning both membranes termed the mitochondrial intermembrane space bridging (MIB) complex.

The protein localises to the mitochondrion. Its subcellular location is the mitochondrion outer membrane. Functionally, required for mitochondrial inner membrane organization. Seems to function through its association with the MICOS complex and the mitochondrial outer membrane sorting assembly machinery (SAM) complex. The protein is DnaJ homolog subfamily C member 11 (DNAJC11) of Pongo abelii (Sumatran orangutan).